The primary structure comprises 293 residues: Formamidopyrimidine-DNA glycosylase (293 aa).

Pro-2 serves as the catalytic Schiff-base intermediate with DNA. Glu-3 acts as the Proton donor in catalysis. Lys-58 functions as the Proton donor; for beta-elimination activity in the catalytic mechanism. DNA contacts are provided by His-104, Arg-123, and Lys-166. The segment at 257 to 293 (AVYDRESEPCRTKGCGGVVKRFVQNGRSTFCCPKCQK) adopts an FPG-type zinc-finger fold. The active-site Proton donor; for delta-elimination activity is the Arg-283.

It belongs to the FPG family. As to quaternary structure, monomer. It depends on Zn(2+) as a cofactor.

The enzyme catalyses Hydrolysis of DNA containing ring-opened 7-methylguanine residues, releasing 2,6-diamino-4-hydroxy-5-(N-methyl)formamidopyrimidine.. The catalysed reaction is 2'-deoxyribonucleotide-(2'-deoxyribose 5'-phosphate)-2'-deoxyribonucleotide-DNA = a 3'-end 2'-deoxyribonucleotide-(2,3-dehydro-2,3-deoxyribose 5'-phosphate)-DNA + a 5'-end 5'-phospho-2'-deoxyribonucleoside-DNA + H(+). Functionally, involved in base excision repair of DNA damaged by oxidation or by mutagenic agents. Acts as a DNA glycosylase that recognizes and removes damaged bases. Has a preference for oxidized purines, such as 7,8-dihydro-8-oxoguanine (8-oxoG). Has AP (apurinic/apyrimidinic) lyase activity and introduces nicks in the DNA strand. Cleaves the DNA backbone by beta-delta elimination to generate a single-strand break at the site of the removed base with both 3'- and 5'-phosphates. This is Formamidopyrimidine-DNA glycosylase from Rhodopseudomonas palustris (strain BisA53).